The following is a 105-amino-acid chain: Small ribosomal subunit protein uS10 (105 aa).

The protein belongs to the universal ribosomal protein uS10 family. As to quaternary structure, part of the 30S ribosomal subunit.

Functionally, involved in the binding of tRNA to the ribosomes. This Thermus thermophilus (strain ATCC BAA-163 / DSM 7039 / HB27) protein is Small ribosomal subunit protein uS10.